The primary structure comprises 354 residues: Guanine nucleotide-binding protein G(i) subunit alpha-3 (354 aa).

G2 carries the N-myristoyl glycine lipid modification. The S-palmitoyl cysteine moiety is linked to residue C3. In terms of domain architecture, G-alpha spans 32-354; sequence KEVKLLLLGA…KNNLKECGLY (323 aa). Positions 35 to 48 are G1 motif; it reads KLLLLGAGESGKST. Residues G42, E43, S44, G45, K46, S47, T48, D150, S151, L175, R176, T177, R178, V179, K180, T181, V201, and G203 each contribute to the GTP site. Residues E43, S44, G45, K46, S47, and T48 each coordinate GDP. Position 47 (S47) interacts with Mg(2+). The GDP site is built by S151, L175, R176, T177, and R178. Residues 173–181 are G2 motif; the sequence is DVLRTRVKT. The residue at position 178 (R178) is an ADP-ribosylarginine; by cholera toxin. Residue T181 coordinates Mg(2+). A G3 motif region spans residues 196–205; it reads FKMFDVGGQR. Q204 is subject to Deamidated glutamine; by Photorhabdus PAU_02230. The G4 motif stretch occupies residues 265-272; sequence ILFLNKKD. N269, K270, D272, L273, C325, A326, and T327 together coordinate GTP. Positions 269, 270, and 272 each coordinate GDP. The G5 motif stretch occupies residues 324–329; it reads TCATDT. Residues C325 and A326 each coordinate GDP. C351 is modified (ADP-ribosylcysteine; by pertussis toxin).

It belongs to the G-alpha family. G(i/o/t/z) subfamily. In terms of assembly, heterotrimeric G proteins are composed of 3 units; alpha, beta and gamma. The alpha subunit contains the guanine nucleotide binding site. GTP binding causes dissociation of the heterotrimer, liberating the individual subunits so that they can interact with downstream effector proteins. Forms a complex with CCDC88A/GIV and EGFR which leads to enhanced EGFR signaling and triggering of cell migration; ligand stimulation is required for recruitment of GNAI3 to the complex. Interacts (inactive GDP-bound form) with CCDC88A/GIV (via GBA motif); the interaction leads to activation of GNAI3. Interacts (inactive GDP-bound form) with CCDC88C/DAPLE (via GBA motif); the interaction leads to activation of GNAI3. Interacts (inactive GDP-bound form) with NUCB1 (via GBA motif) and NUCB2 (via GBA motif); the interaction leads to activation of GNAI3. Interacts (inactive GDP-bound form) with PLCD4 (via GBA motif); the interaction leads to activation of GNAI3. Interacts with INSR; the interaction is probably mediated by CCDC88A/GIV. Interacts with GPSM1. Interacts (GDP-bound form) with GPSM2 (via GoLoco domains). Does not interact with RGS2. Interacts with RGS8 and RGS10; this strongly enhances the intrinsic GTPase activity. Interacts with RGS16; this strongly enhances the intrinsic GTPase activity. Interacts with RGS12. Interacts (via active GTP- or inactive GDP-bound form) with RGS14. Interacts (via active GTP-bound form) with TRPC5 (via ANK repeats) in a homotetrameric ion channel; the interaction is direct and activates the channel activity. In terms of processing, (Microbial infection) Deamidated at Gln-204 by Photorhabdus asymbiotica toxin PAU_02230, blocking GTP hydrolysis of heterotrimeric GNAQ or GNA11 and G-alphai (GNAI1, GNAI2 or GNAI3) proteins, thereby activating RhoA.

It is found in the cytoplasm. The protein localises to the cell membrane. Its subcellular location is the cytoskeleton. It localises to the microtubule organizing center. The protein resides in the centrosome. Functionally, heterotrimeric guanine nucleotide-binding proteins (G proteins) function as transducers downstream of G protein-coupled receptors (GPCRs) in numerous signaling cascades. The alpha chain contains the guanine nucleotide binding site and alternates between an active, GTP-bound state and an inactive, GDP-bound state. Signaling by an activated GPCR promotes GDP release and GTP binding. The alpha subunit has a low GTPase activity that converts bound GTP to GDP, thereby terminating the signal. Both GDP release and GTP hydrolysis are modulated by numerous regulatory proteins. Signaling is mediated via effector proteins, such as adenylate cyclase. Inhibits adenylate cyclase activity, leading to decreased intracellular cAMP levels. Stimulates the activity of receptor-regulated K(+) channels. The active GTP-bound form prevents the association of RGS14 with centrosomes and is required for the translocation of RGS14 from the cytoplasm to the plasma membrane. May play a role in cell division. The active GTP-bound form activates the calcium permeant TRPC5 ion channels. This Homo sapiens (Human) protein is Guanine nucleotide-binding protein G(i) subunit alpha-3 (GNAI3).